The sequence spans 137 residues: Putative pre-16S rRNA nuclease (137 aa).

The protein belongs to the YqgF nuclease family.

The protein resides in the cytoplasm. Its function is as follows. Could be a nuclease involved in processing of the 5'-end of pre-16S rRNA. The sequence is that of Putative pre-16S rRNA nuclease from Clostridium perfringens (strain ATCC 13124 / DSM 756 / JCM 1290 / NCIMB 6125 / NCTC 8237 / Type A).